A 407-amino-acid polypeptide reads, in one-letter code: Elongation factor Tu (407 aa).

The tr-type G domain occupies 10–217; the sequence is KPHVNVGTIG…TLDTYIPDPE (208 aa). Residues 19–26 form a G1 region; that stretch reads GHVDHGKT. Position 19–26 (19–26) interacts with GTP; that stretch reads GHVDHGKT. Residue T26 coordinates Mg(2+). Positions 60–64 are G2; it reads GITIS. The tract at residues 81 to 84 is G3; the sequence is DCPG. GTP contacts are provided by residues 81-85 and 136-139; these read DCPGH and NKSD. The tract at residues 136–139 is G4; the sequence is NKSD. The interval 184–186 is G5; the sequence is SAL.

Belongs to the TRAFAC class translation factor GTPase superfamily. Classic translation factor GTPase family. EF-Tu/EF-1A subfamily. As to quaternary structure, monomer.

Its subcellular location is the cytoplasm. It carries out the reaction GTP + H2O = GDP + phosphate + H(+). GTP hydrolase that promotes the GTP-dependent binding of aminoacyl-tRNA to the A-site of ribosomes during protein biosynthesis. The polypeptide is Elongation factor Tu (Marinomonas sp. (strain MWYL1)).